The primary structure comprises 174 residues: Nucleoside-triphosphatase THEP1 (174 aa).

ATP contacts are provided by residues 7–14 and 98–105; these read GRPGSGKS and CIIIDEIG.

Belongs to the THEP1 NTPase family.

The enzyme catalyses a ribonucleoside 5'-triphosphate + H2O = a ribonucleoside 5'-diphosphate + phosphate + H(+). Has nucleotide phosphatase activity towards ATP, GTP, CTP, TTP and UTP. May hydrolyze nucleoside diphosphates with lower efficiency. This chain is Nucleoside-triphosphatase THEP1, found in Methanothermobacter thermautotrophicus (strain ATCC 29096 / DSM 1053 / JCM 10044 / NBRC 100330 / Delta H) (Methanobacterium thermoautotrophicum).